A 98-amino-acid polypeptide reads, in one-letter code: Venom toxin OcyC11 (98 aa).

The N-terminal stretch at 1 to 20 is a signal peptide; it reads MKIACTLVLFVMLRCYVNAR.

Contains 4 disulfide bonds. In terms of tissue distribution, expressed by the venom gland.

It localises to the secreted. This Opisthacanthus cayaporum (South American scorpion) protein is Venom toxin OcyC11.